Consider the following 561-residue polypeptide: MPQSKYRQQDIRAPRGTTLTAKSWLTEAPLRMLMNNLDPDVAENPHELVVYGGIGRAARDWECYDAIINALTKLEADETLLVQSGKPVGVFKTHENAPRVLIANSNLVPHWATWEHFNELDAKGLAMYGQMTAGSWIYIGSQGIVQGTYETFVEAGRQHYQGNLSGRWVLTAGLGGMGGAQPLAATLAGACSLNIECQQSRIDFRLRTRYVDEQATSLDDALARIEKYTREGKAVSVALCANAADVVPELVKRGVRPDLVTDQTSAHDPLHGYLPSGWRWEEYQAKAASDPQGTVQAAKRSMAKHVQAMLAFSEMGVPTFDYGNNIRQMAKEMGVENAFDFPGFVPAYIRPLFCRGIGPFRWVALSGDPEDIYKTDAKVKEIVADDKHLHHWLDMARERINFQGLPARICWVGLAWRQKLGLAFNEMVRRGEVSAPIVIGRDHLDSGSVASPNRETEAMRDGSDAVSDWPLLNALLNTASGATWVSLHHGGGVGMGFSQHAGMVIVCDGTDEAAARIARVLHNDPATGVMRHADAGYEIAVECAAEQGLNLPMIAATQGKR.

NAD(+) is bound by residues 52–53 (GG), Q130, 176–178 (GMG), E196, R201, 242–243 (NA), 263–267 (QTSAH), 273–274 (YL), and Y322. C410 is an active-site residue. Residue G492 participates in NAD(+) binding.

Belongs to the urocanase family. NAD(+) serves as cofactor.

It is found in the cytoplasm. It carries out the reaction 4-imidazolone-5-propanoate = trans-urocanate + H2O. It participates in amino-acid degradation; L-histidine degradation into L-glutamate; N-formimidoyl-L-glutamate from L-histidine: step 2/3. In terms of biological role, catalyzes the conversion of urocanate to 4-imidazolone-5-propionate. The sequence is that of Urocanate hydratase from Citrobacter koseri (strain ATCC BAA-895 / CDC 4225-83 / SGSC4696).